The primary structure comprises 288 residues: Inorganic pyrophosphatase (288 aa).

Position 80 (Arg80) interacts with diphosphate. Residues Asp117, Asp122, and Asp154 each coordinate Mg(2+). The tract at residues 252 to 271 (TPSYSDAAAQEIPSASPAPA) is disordered. Low complexity predominate over residues 258–271 (AAAQEIPSASPAPA).

Belongs to the PPase family. The cofactor is Mg(2+).

It localises to the cytoplasm. It carries out the reaction diphosphate + H2O = 2 phosphate + H(+). This chain is Inorganic pyrophosphatase (IPP1), found in Candida albicans (strain SC5314 / ATCC MYA-2876) (Yeast).